The sequence spans 298 residues: N-acetylmuramic acid 6-phosphate etherase (298 aa).

The 164-residue stretch at 55–218 (IHAQVSGGGR…STGLMIKSGK (164 aa)) folds into the SIS domain. Catalysis depends on E83, which acts as the Proton donor. E114 is a catalytic residue.

This sequence belongs to the GCKR-like family. MurNAc-6-P etherase subfamily. Homodimer.

It catalyses the reaction N-acetyl-D-muramate 6-phosphate + H2O = N-acetyl-D-glucosamine 6-phosphate + (R)-lactate. Its pathway is amino-sugar metabolism; 1,6-anhydro-N-acetylmuramate degradation. The protein operates within amino-sugar metabolism; N-acetylmuramate degradation. It participates in cell wall biogenesis; peptidoglycan recycling. Functionally, specifically catalyzes the cleavage of the D-lactyl ether substituent of MurNAc 6-phosphate, producing GlcNAc 6-phosphate and D-lactate. Together with AnmK, is also required for the utilization of anhydro-N-acetylmuramic acid (anhMurNAc) either imported from the medium or derived from its own cell wall murein, and thus plays a role in cell wall recycling. The chain is N-acetylmuramic acid 6-phosphate etherase from Shigella flexneri.